The following is a 149-amino-acid chain: Protegrin-5 (149 aa).

An N-terminal signal peptide occupies residues 1–29; the sequence is METQRASLCLGRWSLWLLLLGLVVPSASA. Residues 30 to 130 constitute a propeptide that is removed on maturation; sequence QALSYREAVL…DITCNEVQGV (101 aa). The interval 61–80 is disordered; the sequence is DQPPKADEDPGTPKPVSFTV. 4 cysteine pairs are disulfide-bonded: cysteine 85/cysteine 96, cysteine 107/cysteine 124, cysteine 136/cysteine 145, and cysteine 138/cysteine 143. The residue at position 148 (arginine 148) is an Arginine amide.

It belongs to the cathelicidin family.

The protein resides in the secreted. Its function is as follows. Microbicidal activity. This is Protegrin-5 (NPG5) from Sus scrofa (Pig).